The primary structure comprises 296 residues: MRHEELLTKTFQGPAVVCGTPTSHVYMFKNGSGDSGDSSEEESHRVVLRPRGKERHKSGVHQPPQAGAGDVVLLQRELAQEDSLNKLALQYGCKVADIKKVNNFIREQDLYALKSVKIPVRNHGILMETHKELKPLLSPSSETTVTVELPEADRAGAGTGAQAGQLMGFFKGIDQDIERAVQSEIFLHESYCMDTSHQPLLPAPPKTPMDGADCGIQWWNAVFIMLLIGIVLPVFYLVYFKIQASGETPNSLNTTVIPNGSMAMGTVPGQAPRLAVAVPAVTSADSQFSQTTQAGS.

Over 1 to 217 (MRHEELLTKT…PMDGADCGIQ (217 aa)) the chain is Extracellular. Residues 29 to 67 (KNGSGDSGDSSEEESHRVVLRPRGKERHKSGVHQPPQAG) form a disordered region. The N-linked (GlcNAc...) asparagine glycan is linked to Asn-30. Residues 46–59 (VVLRPRGKERHKSG) show a composition bias toward basic residues. In terms of domain architecture, LysM spans 74 to 118 (LQRELAQEDSLNKLALQYGCKVADIKKVNNFIREQDLYALKSVKI). Residues 218-238 (WWNAVFIMLLIGIVLPVFYLV) traverse the membrane as a helical segment. Over 239 to 296 (YFKIQASGETPNSLNTTVIPNGSMAMGTVPGQAPRLAVAVPAVTSADSQFSQTTQAGS) the chain is Cytoplasmic.

The protein resides in the membrane. This is LysM and putative peptidoglycan-binding domain-containing protein 4 (LYSMD4) from Homo sapiens (Human).